The following is an 86-amino-acid chain: Small ribosomal subunit protein bS20 (86 aa).

Residues 1–22 (MANIKSQIKRIRTNERRRLRNQ) are disordered. The span at 7 to 20 (QIKRIRTNERRRLR) shows a compositional bias: basic residues.

This sequence belongs to the bacterial ribosomal protein bS20 family.

Its function is as follows. Binds directly to 16S ribosomal RNA. In Mycolicibacterium smegmatis (strain ATCC 700084 / mc(2)155) (Mycobacterium smegmatis), this protein is Small ribosomal subunit protein bS20.